Reading from the N-terminus, the 373-residue chain is 4-hydroxy-3-methylbut-2-en-1-yl diphosphate synthase (flavodoxin) (373 aa).

[4Fe-4S] cluster-binding residues include cysteine 270, cysteine 273, cysteine 305, and glutamate 312.

This sequence belongs to the IspG family. [4Fe-4S] cluster serves as cofactor.

It carries out the reaction (2E)-4-hydroxy-3-methylbut-2-enyl diphosphate + oxidized [flavodoxin] + H2O + 2 H(+) = 2-C-methyl-D-erythritol 2,4-cyclic diphosphate + reduced [flavodoxin]. Its pathway is isoprenoid biosynthesis; isopentenyl diphosphate biosynthesis via DXP pathway; isopentenyl diphosphate from 1-deoxy-D-xylulose 5-phosphate: step 5/6. Its function is as follows. Converts 2C-methyl-D-erythritol 2,4-cyclodiphosphate (ME-2,4cPP) into 1-hydroxy-2-methyl-2-(E)-butenyl 4-diphosphate. This Proteus mirabilis (strain HI4320) protein is 4-hydroxy-3-methylbut-2-en-1-yl diphosphate synthase (flavodoxin).